The chain runs to 661 residues: UvrABC system protein B (661 aa).

The Helicase ATP-binding domain occupies 25–178 (EGILKGEKFQ…DEVIRDLIRM (154 aa)). 38 to 45 (GVTGSGKT) is a binding site for ATP. The Beta-hairpin motif lies at 91–114 (YYDYYQPEAYIPETDTYIEKDSSI). In terms of domain architecture, Helicase C-terminal spans 429-591 (QIDHLIGEIR…IVPQTVRKGI (163 aa)). A UVR domain is found at 625 to 660 (EEYIKELEQEMKKLAIELEFEKAAKVRDKIFELKKL).

This sequence belongs to the UvrB family. As to quaternary structure, forms a heterotetramer with UvrA during the search for lesions. Interacts with UvrC in an incision complex.

It localises to the cytoplasm. Its function is as follows. The UvrABC repair system catalyzes the recognition and processing of DNA lesions. A damage recognition complex composed of 2 UvrA and 2 UvrB subunits scans DNA for abnormalities. Upon binding of the UvrA(2)B(2) complex to a putative damaged site, the DNA wraps around one UvrB monomer. DNA wrap is dependent on ATP binding by UvrB and probably causes local melting of the DNA helix, facilitating insertion of UvrB beta-hairpin between the DNA strands. Then UvrB probes one DNA strand for the presence of a lesion. If a lesion is found the UvrA subunits dissociate and the UvrB-DNA preincision complex is formed. This complex is subsequently bound by UvrC and the second UvrB is released. If no lesion is found, the DNA wraps around the other UvrB subunit that will check the other stand for damage. This chain is UvrABC system protein B, found in Caldicellulosiruptor bescii (strain ATCC BAA-1888 / DSM 6725 / KCTC 15123 / Z-1320) (Anaerocellum thermophilum).